A 543-amino-acid chain; its full sequence is Sensor histidine kinase DcuS (543 aa).

Residues 1-20 (MRHSLPYRMLRKRPMKLSTT) lie on the Cytoplasmic side of the membrane. The helical transmembrane segment at 21–41 (VILMVSAVLFSVLLVVHLIYF) threads the bilayer. Topologically, residues 42-181 (SQISDMTRDG…VTQQINDSRW (140 aa)) are periplasmic. Residues 107 to 110 (RYSH), lysine 121, 140 to 142 (GFL), and arginine 147 each bind (R)-malate. The chain crosses the membrane as a helical span at residues 182–202 (SIIWSVLFGMLVGLIGTCILV). Topologically, residues 203 to 543 (NVLKKILFGL…IPWDGERSNR (341 aa)) are cytoplasmic. A PAS domain is found at 212-323 (LEPYEISTLF…IIGAISTFRD (112 aa)). Residues 346–538 (ERSHEFMNKL…QFFVQIPWDG (193 aa)) form the Histidine kinase domain. Position 349 is a phosphohistidine; by autocatalysis (histidine 349).

Homodimer. Autophosphorylated. The phosphoryl group is rapidly transferred to DcuR.

It is found in the cell inner membrane. It catalyses the reaction ATP + protein L-histidine = ADP + protein N-phospho-L-histidine.. In terms of biological role, member of the two-component regulatory system DcuR/DcuS. Involved in the C4-dicarboxylate-stimulated regulation of the genes encoding the anaerobic fumarate respiratory system (frdABCD; nuoAN; dcuB; sdhCDAB; etc.). Weakly regulates the aerobic C4-dicarboxylate transporter dctA. Activates DcuR by phosphorylation. This chain is Sensor histidine kinase DcuS (dcuS), found in Escherichia coli O6:H1 (strain CFT073 / ATCC 700928 / UPEC).